We begin with the raw amino-acid sequence, 801 residues long: Palmitoyl thioesterase CPT1C (801 aa).

Residues Met-1–Asp-49 are Cytoplasmic-facing. Residues Phe-50–Gln-70 form a helical membrane-spanning segment. The Mitochondrial intermembrane portion of the chain corresponds to Leu-71–Gly-103. Residues Leu-104–Val-124 traverse the membrane as a helical segment. Residues Ala-125–Leu-801 are Cytoplasmic-facing. His-469 acts as the Proton acceptor in catalysis. Gly-551 to Asp-563 is a binding site for CoA. (R)-carnitine contacts are provided by Tyr-585, Ser-587, and Thr-598. Positions Leu-760–Leu-801 are required for interaction with GRIA1.

It belongs to the carnitine/choline acetyltransferase family. Peripherally associated with AMPAR complex. AMPAR complex consists of an inner core made of 4 pore-forming GluA/GRIA proteins (GRIA1, GRIA2, GRIA3 and GRIA4) and 4 major auxiliary subunits arranged in a twofold symmetry. One of the two pairs of distinct binding sites is occupied either by CNIH2, CNIH3 or CACNG2, CACNG3. The other harbors CACNG2, CACNG3, CACNG4, CACNG8 or GSG1L. This inner core of AMPAR complex is complemented by outer core constituents binding directly to the GluA/GRIA proteins at sites distinct from the interaction sites of the inner core constituents. Outer core constituents include at least PRRT1, PRRT2, CKAMP44/SHISA9, FRRS1L and NRN1. The proteins of the inner and outer core serve as a platform for other, more peripherally associated AMPAR constituents, including CPT1C. Alone or in combination, these auxiliary subunits control the gating and pharmacology of the AMPAR complex and profoundly impact their biogenesis and protein processing. Interacts with SACM1L; the interaction regulates SACM1L phosphatidylinositol-3-phosphatase activity and translocation to endoplasmic reticulum/trans Golgi network in a malonyl-CoA dependent manner. Interacts with ATL1. In terms of tissue distribution, expressed in brain (at protein level).

Its subcellular location is the synapse. It is found in the cell projection. The protein localises to the dendrite. The protein resides in the axon. It localises to the endoplasmic reticulum membrane. It catalyses the reaction S-hexadecanoyl-L-cysteinyl-[protein] + H2O = L-cysteinyl-[protein] + hexadecanoate + H(+). Palmitoyl thioesterase specifically expressed in the endoplasmic reticulum of neurons. Modulates the trafficking of the glutamate receptor, AMPAR, to plasma membrane through depalmitoylation of GRIA1. Also regulates AMPR trafficking through the regulation of SACM1L phosphatidylinositol-3-phosphatase activity by interaction in a malonyl-CoA dependent manner. Binds malonyl-CoA and couples malonyl-CoA to ceramide levels, necessary for proper spine maturation and contributing to systemic energy homeostasis and appetite control. Binds to palmitoyl-CoA, but does not have carnitine palmitoyltransferase 1 catalytic activity or at very low levels. This is Palmitoyl thioesterase CPT1C (Cpt1c) from Rattus norvegicus (Rat).